Reading from the N-terminus, the 210-residue chain is Superoxide dismutase [Mn], mitochondrial (210 aa).

H29, H77, D163, and H167 together coordinate Mn(2+).

The protein belongs to the iron/manganese superoxide dismutase family. As to quaternary structure, homotetramer. Mn(2+) is required as a cofactor.

The protein resides in the mitochondrion matrix. It catalyses the reaction 2 superoxide + 2 H(+) = H2O2 + O2. In terms of biological role, destroys superoxide anion radicals which are normally produced within the cells and which are toxic to biological systems. This chain is Superoxide dismutase [Mn], mitochondrial (sodB), found in Aspergillus fumigatus (strain ATCC MYA-4609 / CBS 101355 / FGSC A1100 / Af293) (Neosartorya fumigata).